We begin with the raw amino-acid sequence, 475 residues long: UDP-glycosyltransferase 1 (475 aa).

H15 acts as the Proton acceptor in catalysis. Residue H15 coordinates an anthocyanidin. The Charge relay role is filled by D117. The UDP-alpha-D-glucose site is built by A345, Q347, H362, W365, N366, S367, and E370. G385 contacts an anthocyanidin. The UDP-alpha-D-glucose site is built by E386 and Q387.

This sequence belongs to the UDP-glycosyltransferase family. Mostly expressed in leaves and flowers, and, to a lower extent, in roots and stems.

It carries out the reaction (20S)-protopanaxadiol + UDP-alpha-D-glucose = (20S)-ginsenoside C-K + UDP + H(+). It catalyses the reaction (20S)-ginsenoside Rg3 + UDP-alpha-D-glucose = (20S)-ginsenoside Rd + UDP + H(+). The enzyme catalyses (20S)-ginsenoside Rh2 + UDP-alpha-D-glucose = (20S)-ginsenoside F2 + UDP + H(+). The catalysed reaction is (20S)-protopanaxatriol + UDP-alpha-D-glucose = (20S)-ginsenoside F1 + UDP + H(+). It carries out the reaction dammarenediol-II + UDP-alpha-D-glucose = (20S)-20-O-(beta-D-glucosyl)-3-hydroxydammarene + UDP + H(+). The protein operates within secondary metabolite biosynthesis; terpenoid biosynthesis. In terms of biological role, component of the dammarane-type triterpene saponins (e.g. ginsenosides or panaxosides) biosynthetic pathway. Glycosyltransferase that catalyzes the biosynthesis of ginsenoside F1 from protopanaxatriol (PPT). Triggers C20-OH glycosylation of ginsenoside Rg3 to produce ginsenoside Rd. Mediates the conversion of protopanaxadiol (PPD) to the ginsenoside compound K. catalyzes the production of 20S-O-beta-(D-glucosyl)-dammarenediol II form dammarenediol II (DM). In Panax ginseng (Korean ginseng), this protein is UDP-glycosyltransferase 1.